Here is a 223-residue protein sequence, read N- to C-terminus: Transcriptional regulatory protein PhoP (223 aa).

The Response regulatory domain occupies 2-116 (RVLVVEDNAL…EVMARMQALM (115 aa)). Residue D51 is modified to 4-aspartylphosphate. The ompR/PhoB-type DNA-binding region spans 124–222 (SQVISLPPFQ…VRGQGYLFEL (99 aa)).

In terms of assembly, monomer in the inactive, unphosphorylated state and dimer in the active, phosphorylated state. Post-translationally, phosphorylated by PhoQ.

The protein localises to the cytoplasm. Feedback inhibited by MgrB, which seems to bind PhoQ, altering its activity and that of downstream effector PhoP. PhoP-regulated transcription is redox-sensitive, being activated when the periplasm becomes more reducing (deletion of dsbA/dsbB, or treatment with dithiothreitol). MgrB acts between DsbA/DsbB and PhoP/PhoQ in this pathway. Member of the two-component regulatory system PhoP/PhoQ involved in adaptation to low Mg(2+) environments and the control of acid resistance genes. In low periplasmic Mg(2+), PhoQ phosphorylates PhoP, resulting in the expression of PhoP-activated genes (PAG) and repression of PhoP-repressed genes (PRG). In high periplasmic Mg(2+), PhoQ dephosphorylates phospho-PhoP, resulting in the repression of PAG and may lead to expression of some PRG. Mediates magnesium influx to the cytosol by activation of MgtA. Promotes expression of the two-component regulatory system rstA/rstB and transcription of the hemL, mgrB, nagA, slyB, vboR and yrbL genes. In Escherichia coli (strain K12), this protein is Transcriptional regulatory protein PhoP (phoP).